The primary structure comprises 204 residues: Thymidylate kinase (204 aa).

9–16 (GLDGAGKS) contacts ATP.

The protein belongs to the thymidylate kinase family.

It carries out the reaction dTMP + ATP = dTDP + ADP. Functionally, phosphorylation of dTMP to form dTDP in both de novo and salvage pathways of dTTP synthesis. The protein is Thymidylate kinase of Francisella philomiragia subsp. philomiragia (strain ATCC 25017 / CCUG 19701 / FSC 153 / O#319-036).